We begin with the raw amino-acid sequence, 293 residues long: MQSFNTIGLIGRLASASTQYSLKRLIAFLTDQKLEVLLDKETSTILPDCDLPVATRPELAQACDLIIVVGGDGSLLSAARAFAGHDVQILGINRGRLGFLTDISPEDIENKVGEVLSGRYLLEQRFLLESTLLRDDEVMSTGLALNDVVIHPGKLIRMIEFELYIDDEFVYRQRSDGLIISSPTGSTAYALSGGGPIMHPNLDAVVLVPLYPHTLSSRPIVVGGNSEIRLIVCENNNLNPLVTCDGQSQTMTQPGDTVFITKSEKRLKLIHPEGHNFYETCRSKLGWASHTGN.

The active-site Proton acceptor is the Asp-72. NAD(+)-binding positions include Asp-72 to Gly-73, Asn-146 to Asp-147, Arg-157, Arg-174, Asp-176, Thr-187 to Ser-192, and Gln-247.

Belongs to the NAD kinase family. It depends on a divalent metal cation as a cofactor.

It localises to the cytoplasm. It carries out the reaction NAD(+) + ATP = ADP + NADP(+) + H(+). Functionally, involved in the regulation of the intracellular balance of NAD and NADP, and is a key enzyme in the biosynthesis of NADP. Catalyzes specifically the phosphorylation on 2'-hydroxyl of the adenosine moiety of NAD to yield NADP. In Teredinibacter turnerae (strain ATCC 39867 / T7901), this protein is NAD kinase.